The following is a 144-amino-acid chain: Putative sugar phosphate isomerase RC0402 (144 aa).

H12 serves as a coordination point for substrate. H101 functions as the Proton donor in the catalytic mechanism. R135 provides a ligand contact to substrate.

It belongs to the LacAB/RpiB family.

In Rickettsia conorii (strain ATCC VR-613 / Malish 7), this protein is Putative sugar phosphate isomerase RC0402.